Here is a 607-residue protein sequence, read N- to C-terminus: Leucine-rich repeat-containing protein 63 (607 aa).

7 LRR repeats span residues 357-378 (QLVY…VLYL), 380-401 (NLQV…IQQL), 403-424 (YLRK…LFCL), 426-447 (YLEE…IQKL), 449-470 (SLEK…ILKL), 471-497 (NLVK…NPPR), and 498-524 (LTHI…VVQK).

The polypeptide is Leucine-rich repeat-containing protein 63 (Lrrc63) (Rattus norvegicus (Rat)).